The sequence spans 524 residues: MAENNNLKLASTMEGRVEQLAEQRQVIEAGGGERRVEKQHSQGKQTARERLNNLLDPHSFDEVGAFRKHRTTLFGMDKAVVPADGVVTGRGTILGRPVHAASQDFTVMGGSAGETQSTKVVETMEQALLTGTPFLFFYDSGGARIQEGIDSLSGYGKMFFANVKLSGVVPQIAIIAGPCAGGASYSPALTDFIIMTKKAHMFITGPQVIKSVTGEDVTADELGGAEAHMAISGNIHFVAEDDDAAELIAKKLLSFLPQNNTEEASFVNPNNDVSPNTELRDIVPIDGKKGYDVRDVIAKIVDWGDYLEVKAGYATNLVTAFARVNGRSVGIVANQPSVMSGCLDINASDKAAEFVNFCDSFNIPLVQLVDVPGFLPGVQQEYGGIIRHGAKMLYAYSEATVPKITVVLRKAYGGSYLAMCNRDLGADAVYAWPSAEIAVMGAEGAANVIFRKEIKAADDPDAMRAEKIEEYQNAFNTPYVAAARGQVDDVIDPADTRRKIASALEMYATKRQTRPAKKHGNFPC.

Residues Met-13 to Asn-268 form the CoA carboxyltransferase N-terminal domain. Positions Met-13–Met-506 are carboxyltransferase. The CoA carboxyltransferase C-terminal domain occupies Ser-274–Met-506.

In terms of assembly, homohexamer. Transcarboxylase is composed of three subunits: 1.3S, 5S, and 12S. The core of the enzyme is composed of six 12S subunits. On each side of the core there are three pairs of 5S subunits. Each 5S dimer is attached to the core by two 1.3S subunits. Thus the total number of chains is 30 (6 + 12 + 12).

It catalyses the reaction (S)-methylmalonyl-CoA + pyruvate = propanoyl-CoA + oxaloacetate. Its function is as follows. The 12S subunit specifically catalyzes the transfer of the carboxyl group of methylmalonyl CoA to the biotin of the 1.3S subunit forming propanoyl-CoA and carboxylated 1.3S-biotin. This chain is Methylmalonyl-CoA carboxyltransferase 12S subunit, found in Propionibacterium freudenreichii subsp. shermanii.